The primary structure comprises 139 residues: Cystatin cpi-1 (139 aa).

The first 19 residues, 1–19 (MRFILLIALVFAVLDGINC), serve as a signal peptide directing secretion. A glycan (N-linked (GlcNAc...) asparagine) is linked at Asn-29. The short motif at 65 to 69 (QVVAG) is the Secondary area of contact element. Residues Cys-83 and Cys-99 are joined by a disulfide bond.

The protein belongs to the cystatin family.

Its function is as follows. Cysteine protease inhibitor which inhibits members of the peptidase C1 family. Does not inhibit asparaginyl endopeptidase. May play a protective role against exogenous cysteine proteases derived from soil bacteria or fungi, or rotting fruits and vegetation. This Caenorhabditis elegans protein is Cystatin cpi-1.